The sequence spans 36 residues: Photosystem II reaction center protein Y (36 aa).

Residues 1–4 (MDTR) are Lumenal-facing. The helical transmembrane segment at 5-23 (LLVIAAPVLVAASWALFNI) threads the bilayer. The Stromal segment spans residues 24–36 (GRLAIQQIQRLSR).

This sequence belongs to the PsbY family. PSII is composed of 1 copy each of membrane proteins PsbA, PsbB, PsbC, PsbD, PsbE, PsbF, PsbH, PsbI, PsbJ, PsbK, PsbL, PsbM, PsbT, PsbX, PsbY, PsbZ, Psb30/Ycf12, at least 3 peripheral proteins of the oxygen-evolving complex and a large number of cofactors. It forms dimeric complexes.

It localises to the plastid. The protein localises to the chloroplast thylakoid membrane. Functionally, loosely associated component of the core of photosystem II (PSII), it is not always seen in crystals. PSII is a light-driven water plastoquinone oxidoreductase, using light energy to abstract electrons from H(2)O, generating a proton gradient subsequently used for ATP formation. This chain is Photosystem II reaction center protein Y, found in Thalassiosira pseudonana (Marine diatom).